The chain runs to 240 residues: Transcription factor bHLH47 (240 aa).

A compositionally biased stretch (polar residues) spans 1–13; the sequence is MVSKTPSTSSDEA. The interval 1–26 is disordered; sequence MVSKTPSTSSDEANATADERCRKGKV. The region spanning 27 to 77 is the bHLH domain; it reads PKRINKAVRERLKREHLNELFIELADTLELNQQNSGKASILCEATRFLKDV. Residues 98-131 are a coiled coil; sequence VTTEKNELKEETSVLETEISKLQNEIEARANQSK. A compositionally biased stretch (polar residues) spans 128–138; that stretch reads NQSKPDLNTSP. The disordered stretch occupies residues 128-153; the sequence is NQSKPDLNTSPAPEYHHHHYQQQHPE.

In terms of assembly, homodimer. Forms heterodimer with PYEL proteins bHLH115, bHLH104 and ILR3. In terms of tissue distribution, expressed constitutively in roots, leaves, stems, and flowers.

It localises to the nucleus. This chain is Transcription factor bHLH47 (BHLH47), found in Arabidopsis thaliana (Mouse-ear cress).